We begin with the raw amino-acid sequence, 367 residues long: Chorismate synthase (367 aa).

Arginine 48 serves as a coordination point for NADP(+). FMN is bound by residues 125–127, glycine 283, 298–302, and arginine 324; these read RSS and KPTPS.

This sequence belongs to the chorismate synthase family. As to quaternary structure, homotetramer. FMNH2 serves as cofactor.

It carries out the reaction 5-O-(1-carboxyvinyl)-3-phosphoshikimate = chorismate + phosphate. The protein operates within metabolic intermediate biosynthesis; chorismate biosynthesis; chorismate from D-erythrose 4-phosphate and phosphoenolpyruvate: step 7/7. Functionally, catalyzes the anti-1,4-elimination of the C-3 phosphate and the C-6 proR hydrogen from 5-enolpyruvylshikimate-3-phosphate (EPSP) to yield chorismate, which is the branch point compound that serves as the starting substrate for the three terminal pathways of aromatic amino acid biosynthesis. This reaction introduces a second double bond into the aromatic ring system. This is Chorismate synthase from Agathobacter rectalis (strain ATCC 33656 / DSM 3377 / JCM 17463 / KCTC 5835 / VPI 0990) (Eubacterium rectale).